The following is a 299-amino-acid chain: dTDP-4-dehydrorhamnose reductase (299 aa).

NADH contacts are provided by residues G10–V12, D30, D39–F40, and A63–T65. Q11–V12 lines the NADPH pocket. Residues D39–F40, A63–T65, and Y102 each bind NADPH. A dTDP-beta-L-rhamnose-binding site is contributed by T104 to D105. NADH contacts are provided by Y128 and K132. NADPH is bound by residues Y128 and K132. Residue Y128 is the Proton donor/acceptor of the active site. W153 is a dTDP-beta-L-rhamnose binding site.

This sequence belongs to the dTDP-4-dehydrorhamnose reductase family. Homodimer. Mg(2+) serves as cofactor.

It carries out the reaction dTDP-beta-L-rhamnose + NADP(+) = dTDP-4-dehydro-beta-L-rhamnose + NADPH + H(+). The protein operates within carbohydrate biosynthesis; dTDP-L-rhamnose biosynthesis. It functions in the pathway bacterial outer membrane biogenesis; LPS O-antigen biosynthesis. In terms of biological role, involved in the biosynthesis of the dTDP-L-rhamnose which is an important component of lipopolysaccharide (LPS). Catalyzes the reduction of dTDP-6-deoxy-L-lyxo-4-hexulose to yield dTDP-L-rhamnose. RmlD uses NADH and NADPH nearly equally well. This chain is dTDP-4-dehydrorhamnose reductase, found in Escherichia coli (strain K12).